The chain runs to 152 residues: Prostaglandin E synthase (152 aa).

The Lumenal portion of the chain corresponds to 1–12 (MPAHSLVMSSPA). A helical transmembrane segment spans residues 13–41 (LPAFLLCSTLLVIKMYVVAIITGQVRLRK). R38 provides a ligand contact to glutathione. The Cytoplasmic portion of the chain corresponds to 42 to 60 (KAFANPEDALRHGGPQYCR). Residues 61–90 (SDPDVERCLRAHRNDMETIYPFLFLGFVYS) form a helical membrane-spanning segment. 73–77 (RNDME) serves as a coordination point for glutathione. The Lumenal segment spans residues 91–95 (FLGPN). Residues 96–119 (PFVAWMHFLVFLVGRVAHTVAYLG) form a helical membrane-spanning segment. H113 and Y117 together coordinate glutathione. Residues 120 to 123 (KLRA) are Cytoplasmic-facing. The helical transmembrane segment at 124–152 (PIRSVTYTLAQLPCASMALQILWEAARHL) threads the bilayer. 126 to 130 (RSVTY) is a glutathione binding site.

It belongs to the MAPEG family. As to quaternary structure, homotrimer. Glutathione serves as cofactor.

The protein localises to the membrane. It localises to the cytoplasm. The protein resides in the perinuclear region. It carries out the reaction prostaglandin H2 = prostaglandin E2. It catalyses the reaction 2-glyceryl-prostaglandin H2 = 2-glyceryl-prostaglandin E2. The enzyme catalyses prostaglandin G2 = (15S)-15-hydroperoxy-prostaglandin E2. The catalysed reaction is 1-chloro-2,4-dinitrobenzene + glutathione = 2,4-dinitrophenyl-S-glutathione + chloride + H(+). It carries out the reaction (5S)-hydroperoxy-(6E,8Z,11Z,14Z)-eicosatetraenoate + 2 glutathione = (5S)-hydroxy-(6E,8Z,11Z,14Z)-eicosatetraenoate + glutathione disulfide + H2O. The protein operates within lipid metabolism; prostaglandin biosynthesis. With respect to regulation, induced by interleukin IL1B. Functionally, terminal enzyme of the cyclooxygenase (COX)-2-mediated prostaglandin E2 (PGE2) biosynthetic pathway. Catalyzes the glutathione-dependent oxidoreduction of prostaglandin endoperoxide H2 (PGH2) to prostaglandin E2 (PGE2) in response to inflammatory stimuli. Plays a key role in inflammation response, fever and pain. Also catalyzes the oxidoreduction of endocannabinoids into prostaglandin glycerol esters and PGG2 into 15-hydroperoxy-PGE2. In addition, displays low glutathione transferase and glutathione-dependent peroxidase activities, toward 1-chloro-2,4-dinitrobenzene and 5-hydroperoxyicosatetraenoic acid (5-HPETE), respectively. This Homo sapiens (Human) protein is Prostaglandin E synthase (PTGES).